Here is a 265-residue protein sequence, read N- to C-terminus: Early E4 31 kDa protein (265 aa).

This sequence belongs to the adenoviridae E4 30 to 34 kDa protein family. Interacts with E1B-55k.

It is found in the host nucleus. The protein resides in the host cytoplasm. Functionally, plays a major role to prevent cellular inhibition of viral genome replication by nuclear bodies. Assembles an SCF-like E3 ubiquitin ligase complex based on the cellular proteins ELOB, ELOC, CUL5 and RBX1, in cooperation with viral E1B-55K. This viral RING-type ligase ubiquitinates cellular substrates prior to proteasomal degradation: p53/TP53, LIG4, MRE11-RAD50-NBS1 (MRN) complex, ITGA3, DAXX and BLM. In Canis lupus familiaris (Dog), this protein is Early E4 31 kDa protein.